Here is a 142-residue protein sequence, read N- to C-terminus: uncharacterized protein (142 aa).

The region spanning 1-120 (MADKFDANDE…TILKWEKNMD (120 aa)) is the N-acetyltransferase domain.

Belongs to the acetyltransferase family.

This is an uncharacterized protein from Streptococcus pyogenes serotype M3 (strain ATCC BAA-595 / MGAS315).